A 298-amino-acid polypeptide reads, in one-letter code: Lipoyl synthase 1 (298 aa).

Cys34, Cys39, Cys45, Cys60, Cys64, Cys67, and Ser274 together coordinate [4Fe-4S] cluster. The Radical SAM core domain occupies 46-263; it reads FKAGTATFLI…RRAGEGMGFL (218 aa). Residues 277–298 form a disordered region; it reads AEQVQRLMRSHPRTPKNQHSPE.

It belongs to the radical SAM superfamily. Lipoyl synthase family. It depends on [4Fe-4S] cluster as a cofactor.

The protein resides in the cytoplasm. It catalyses the reaction [[Fe-S] cluster scaffold protein carrying a second [4Fe-4S](2+) cluster] + N(6)-octanoyl-L-lysyl-[protein] + 2 oxidized [2Fe-2S]-[ferredoxin] + 2 S-adenosyl-L-methionine + 4 H(+) = [[Fe-S] cluster scaffold protein] + N(6)-[(R)-dihydrolipoyl]-L-lysyl-[protein] + 4 Fe(3+) + 2 hydrogen sulfide + 2 5'-deoxyadenosine + 2 L-methionine + 2 reduced [2Fe-2S]-[ferredoxin]. It participates in protein modification; protein lipoylation via endogenous pathway; protein N(6)-(lipoyl)lysine from octanoyl-[acyl-carrier-protein]: step 2/2. Functionally, catalyzes the radical-mediated insertion of two sulfur atoms into the C-6 and C-8 positions of the octanoyl moiety bound to the lipoyl domains of lipoate-dependent enzymes, thereby converting the octanoylated domains into lipoylated derivatives. The protein is Lipoyl synthase 1 of Gloeobacter violaceus (strain ATCC 29082 / PCC 7421).